The following is a 629-amino-acid chain: Dehydrogenase pyvF (629 aa).

The N-terminal stretch at 1–22 (MAGSPFTTALLSAWTLSTVAVG) is a signal peptide. FAD contacts are provided by residues 61–62 (AS) and 82–83 (EA). Asparagine 92 is a glycosylation site (N-linked (GlcNAc...) asparagine). 144–147 (NLMA) contributes to the FAD binding site. Asparagine 172, asparagine 182, asparagine 256, asparagine 284, asparagine 312, and asparagine 421 each carry an N-linked (GlcNAc...) asparagine glycan. The active-site Proton acceptor is histidine 552. FAD contacts are provided by residues alanine 586 and 597-598 (PL).

It belongs to the GMC oxidoreductase family. Homodimer. The cofactor is FAD.

Its pathway is secondary metabolite biosynthesis. Dehydrogenase; part of the gene cluster that mediates the biosynthesis of pyranoviolin A, a pyranonigrin analog with a C-3 methoxy group. Initially, the PKS portion of pyvA synthesizes C-10 carbon chain from 5 molecules of malonyl-CoA, which is then condensed with the thiolation (T) domain-bound glycine activated by the adenylation (A) domain. The subsequent chain release by Dieckmann condensation (DKC) could be catalyzed by the TE domain present at the C-terminus of pyvA and/or the alpha/beta hydrolase pyvD, installing the tetramic acid moiety. The FAD-dependent monooxygenase pyvC next epoxidizes one of the olefins of the polyketide part, and the epoxide ring-opening induces the dihydro-gamma-pyrone ring formation. The cytochrome P450 monooxygeanse pyvB would be responsible for the 2 consecutive reactions, in which the dihydro-gamma-pyrone is oxidized to gamma-pyrone and C-7 is hydroxylated to yield pyranonigrin F. Finally, the O-methyltransferase pyvH methylates the C-3 hydroxy group to complete the biosynthesis. The polypeptide is Dehydrogenase pyvF (Aspergillus violaceofuscus (strain CBS 115571)).